Here is a 398-residue protein sequence, read N- to C-terminus: Inner membrane protein YjgN (398 aa).

Residues 1–24 (MAQVINEMDVPSHSFVFHGTGERY) lie on the Cytoplasmic side of the membrane. Residues 25–45 (FLICVVNVLLTIITLGIYLPW) traverse the membrane as a helical segment. Residues 46-73 (ALMKCKRYLYANMEVNGQRFSYGITGGN) lie on the Periplasmic side of the membrane. A helical membrane pass occupies residues 74–94 (VFVSCLFFVFFYFAILMTVSA). Position 95 (Asp95) is a topological domain, cytoplasmic. Residues 96 to 116 (MPLVGCVLTLLLLVLLIFMAA) form a helical membrane-spanning segment. Residues 117 to 142 (KGLRHQALMTSLNGVRFSFNCSMKGF) are Periplasmic-facing. Residues 143 to 163 (WWVTFFLPILMAIGMGTVFFI) traverse the membrane as a helical segment. The Cytoplasmic segment spans residues 164 to 175 (STKMLPANSSSS). A helical membrane pass occupies residues 176–196 (VIISMVLMAIVGIVSIGIFNG). Topologically, residues 197–228 (TLYSLVMSFLWSNTSFGIHRFKVKLDTTYCIK) are periplasmic. The chain crosses the membrane as a helical span at residues 229-249 (YAILAFLALLPFLAVAGYIIF). Residues 250–278 (DQILNAYDSSVYANDDIENLQQFMEMQRK) lie on the Cytoplasmic side of the membrane. The helical transmembrane segment at 279–299 (MIIAQLIYYFGIAVSTSYLTV) threads the bilayer. The Periplasmic segment spans residues 300–333 (SLRNHFMSNLSLNDGRIRFRLTLTYHGMLYRMCA). Residues 334 to 354 (LVVISGITGGLAYPLLKIWMI) form a helical membrane-spanning segment. Over 355–398 (DWQAKNTYLLGDLDDLPLINKEEQPDKGFLASISRGVMPSLPFL) the chain is Cytoplasmic.

It localises to the cell inner membrane. This is Inner membrane protein YjgN (yjgN) from Escherichia coli (strain K12).